Reading from the N-terminus, the 456-residue chain is Putative F-box/LRR-repeat protein At3g18150 (456 aa).

In terms of domain architecture, F-box spans 30–78; the sequence is VDSISSLPDVILQHILSFIPTKLAITTSLLSKRWRHVWCDTPSLSFNDY. LRR repeat units lie at residues 177-202, 203-213, 228-253, 278-303, 333-358, and 396-422; these read TCLLSDESMANILFGCPILESLTLDH, CGGLRVLDLSK, VPELTAMQIVAPHTHCLRLRNSKLPC, KADFLQVTLLKMLEKLHNVEKLTLGG, IFQYVIPGIERVLQNSPDLKKLTLLT, and CLDVESEHVVSFVELMLKNTKALDKMV.

The sequence is that of Putative F-box/LRR-repeat protein At3g18150 from Arabidopsis thaliana (Mouse-ear cress).